The primary structure comprises 576 residues: 2-isopropylmalate synthase (576 aa).

Residues 31–305 (PIWMSTDLRD…DPGLDFSHVN (275 aa)) enclose the Pyruvate carboxyltransferase domain. Mg(2+) is bound by residues Asp-40, His-244, His-246, and Asn-280. Residues 437–576 (ADGPIGYVSH…RGMAPSMELA (140 aa)) are regulatory domain.

Belongs to the alpha-IPM synthase/homocitrate synthase family. LeuA type 2 subfamily. In terms of assembly, homodimer. Mg(2+) is required as a cofactor.

Its subcellular location is the cytoplasm. It carries out the reaction 3-methyl-2-oxobutanoate + acetyl-CoA + H2O = (2S)-2-isopropylmalate + CoA + H(+). Its pathway is amino-acid biosynthesis; L-leucine biosynthesis; L-leucine from 3-methyl-2-oxobutanoate: step 1/4. Its function is as follows. Catalyzes the condensation of the acetyl group of acetyl-CoA with 3-methyl-2-oxobutanoate (2-ketoisovalerate) to form 3-carboxy-3-hydroxy-4-methylpentanoate (2-isopropylmalate). The protein is 2-isopropylmalate synthase of Ralstonia nicotianae (strain ATCC BAA-1114 / GMI1000) (Ralstonia solanacearum).